A 319-amino-acid polypeptide reads, in one-letter code: Non-homologous end joining protein Ku (319 aa).

The 179-residue stretch at 10–188 (ISFGLVTVPI…PQGIELSEDE (179 aa)) folds into the Ku domain. Residues 252–319 (QSVAKAKASR…TTPKKPRRSA (68 aa)) are disordered. Residues 260-274 (SRGESGEADVHELPR) show a composition bias toward basic and acidic residues. Basic residues predominate over residues 305–319 (TAAKKTTPKKPRRSA).

This sequence belongs to the prokaryotic Ku family. As to quaternary structure, homodimer. Interacts with LigD.

Its function is as follows. With LigD forms a non-homologous end joining (NHEJ) DNA repair enzyme, which repairs dsDNA breaks with reduced fidelity. Binds linear dsDNA with 5'- and 3'- overhangs but not closed circular dsDNA nor ssDNA. Recruits and stimulates the ligase activity of LigD. This Streptomyces avermitilis (strain ATCC 31267 / DSM 46492 / JCM 5070 / NBRC 14893 / NCIMB 12804 / NRRL 8165 / MA-4680) protein is Non-homologous end joining protein Ku.